The following is a 350-amino-acid chain: Ion-translocating oxidoreductase complex subunit D (350 aa).

A run of 3 helical transmembrane segments spans residues 25 to 45, 89 to 109, and 124 to 144; these read ALCL…GSLI, IPPL…IIIV, and AMAG…SWVA. An FMN phosphoryl threonine modification is found at Thr185. The next 5 membrane-spanning stretches (helical) occupy residues 212–232, 239–259, 265–285, 298–318, and 319–339; these read SYGV…LVLL, WHIS…GFLI, VSPL…FIAT, LIFG…GGYP, and DAVA…DHYV.

The protein belongs to the NqrB/RnfD family. In terms of assembly, the complex is composed of six subunits: RnfA, RnfB, RnfC, RnfD, RnfE and RnfG. Requires FMN as cofactor.

It localises to the cell inner membrane. Part of a membrane-bound complex that couples electron transfer with translocation of ions across the membrane. The sequence is that of Ion-translocating oxidoreductase complex subunit D from Shewanella denitrificans (strain OS217 / ATCC BAA-1090 / DSM 15013).